A 207-amino-acid chain; its full sequence is MDMHMIVKVVAILAVLFLVYKLWESMNKPNASPLKIQNPYEKYMNSAEGGEYDAEDDDIYYPETDAEDDDIYTGETDDMYDGEDDDIYVQEGDDIEDAEDEPYDDSADMEQDVPKVQQPMMPLLTPSSQLLPKPSPEAADFAQFAPKNLQAQNFLTATQWIGVNTQGSSLKNANYDLRADPIIPKADVGPWMMSSVDPNIYQKPLFG.

Positions 7–23 (VKVVAILAVLFLVYKLW) are hydrophobic. The interval 63–82 (ETDAEDDDIYTGETDDMYDG) is disordered.

Interacts with the major capsid protein.

It localises to the virion. Its function is as follows. One of the minor capsid proteins that constitute a network internal to the major capsid proteins and outside the lipid membrane. The minor capsid proteins glue and stabilize the capsomers. the p11 zip protein binds together the neighboring symmetrons. This Paramecium bursaria Chlorella virus 1 (PBCV-1) protein is Minor capsid protein P11.